Here is a 79-residue protein sequence, read N- to C-terminus: MPVAVGPYGQSQPSCFDRVKMGFVMGCAVGMAAGALFGTFSCLRIGMRGRELMGGIGKTMMQSGGTFGTFMAIGMGIRC.

A helical membrane pass occupies residues 22-44; it reads GFVMGCAVGMAAGALFGTFSCLR. The tract at residues 42–60 is sufficient for antibacterial activity; the sequence is CLRIGMRGRELMGGIGKTM.

Belongs to the MGR2 family.

Its subcellular location is the mitochondrion inner membrane. Functionally, has antibacterial activity against a variety of bacteria including S.aureus, P.aeruginosa and M.tuberculosis. Acts by inducing bacterial membrane breakage. In terms of biological role, induces production of reactive oxygen species (ROS) which are necessary for cell proliferation. May play a role in inducing oxidative DNA damage and replicative senescence. May play a role in the coordination of mitochondrial morphology and cell proliferation. This is Reactive oxygen species modulator 1 (ROMO1) from Bos taurus (Bovine).